A 175-amino-acid polypeptide reads, in one-letter code: uncharacterized protein (175 aa).

This is an uncharacterized protein from Connochaetes taurinus (Blue wildebeest).